The sequence spans 433 residues: MPPKKPAPAAANKKTQEKKKEKIIEDKTFGLKNKKGAKQQKFIKAVTQQVKFGQQNARQIAAAESEKTKKKDDKKKELSELNELFKPVVAAQKVSKGVDPKSVLCAFFKQGQCTKGDKCKFSHDLSLERKCEKRSLYVDGRDDELLEKDTMENWDEKKLEEVVNKKHGEAEKKKAKTQIVCKYFLDAIENNKYGWFWVCPGGGDNCMYRHALPVGFVLKKDKKNEEKNEEEISLEDLIETERSLLGANVTRITLETFLAWKKRKRQEKLAKAEQDMERKKADFKAGRALGVSGREVFEFRPELVDDDDEEADDTKYAEEDYNYGMSNQVEDTEEVQDIDIARFIPKEVDNAGITVASADRFTAKAPPTNDIDDNKLSEASGGTMENGEHSEDQTLEDGETNEESEAVPVDENLFTGEDLDELEEELNTLDLDE.

Positions Met-1–Lys-20 are disordered. A coiled-coil region spans residues Ala-57 to Lys-86. 2 C3H1-type zinc fingers span residues Asp-99–Ser-126 and Ala-175–Pro-213. The stretch at Val-217–Ala-288 forms a coiled coil. Positions Ile-238 to Lys-262 are required for interaction with DRG1. The disordered stretch occupies residues Ala-358–Asp-420. The span at Gln-393–Glu-405 shows a compositional bias: acidic residues.

This sequence belongs to the ZC3H15/TMA46 family. As to quaternary structure, interacts with drg1.

Its subcellular location is the cytoplasm. The protein resides in the nucleus. Functionally, protects drg1 from proteolytic degradation. The chain is Zinc finger CCCH domain-containing protein 15 (zc3h15) from Danio rerio (Zebrafish).